A 103-amino-acid polypeptide reads, in one-letter code: UPF0145 protein BC_1816 (103 aa).

This sequence belongs to the UPF0145 family.

The sequence is that of UPF0145 protein BC_1816 from Bacillus cereus (strain ATCC 14579 / DSM 31 / CCUG 7414 / JCM 2152 / NBRC 15305 / NCIMB 9373 / NCTC 2599 / NRRL B-3711).